Here is a 202-residue protein sequence, read N- to C-terminus: Imidazoleglycerol-phosphate dehydratase (202 aa).

The protein belongs to the imidazoleglycerol-phosphate dehydratase family.

The protein resides in the cytoplasm. The enzyme catalyses D-erythro-1-(imidazol-4-yl)glycerol 3-phosphate = 3-(imidazol-4-yl)-2-oxopropyl phosphate + H2O. It functions in the pathway amino-acid biosynthesis; L-histidine biosynthesis; L-histidine from 5-phospho-alpha-D-ribose 1-diphosphate: step 6/9. This Brucella abortus (strain S19) protein is Imidazoleglycerol-phosphate dehydratase.